Here is a 156-residue protein sequence, read N- to C-terminus: 3-hydroxyacyl-[acyl-carrier-protein] dehydratase FabZ (156 aa).

H57 is an active-site residue.

It belongs to the thioester dehydratase family. FabZ subfamily.

Its subcellular location is the cytoplasm. It carries out the reaction a (3R)-hydroxyacyl-[ACP] = a (2E)-enoyl-[ACP] + H2O. Functionally, involved in unsaturated fatty acids biosynthesis. Catalyzes the dehydration of short chain beta-hydroxyacyl-ACPs and long chain saturated and unsaturated beta-hydroxyacyl-ACPs. In Anaeromyxobacter sp. (strain K), this protein is 3-hydroxyacyl-[acyl-carrier-protein] dehydratase FabZ.